A 254-amino-acid chain; its full sequence is Urease accessory protein UreD (254 aa).

The protein belongs to the UreD family. In terms of assembly, ureD, UreF and UreG form a complex that acts as a GTP-hydrolysis-dependent molecular chaperone, activating the urease apoprotein by helping to assemble the nickel containing metallocenter of UreC. The UreE protein probably delivers the nickel.

It is found in the cytoplasm. In terms of biological role, required for maturation of urease via the functional incorporation of the urease nickel metallocenter. The chain is Urease accessory protein UreD from Streptomyces coelicolor (strain ATCC BAA-471 / A3(2) / M145).